A 450-amino-acid polypeptide reads, in one-letter code: Cysteine proteinase (450 aa).

An N-terminal signal peptide occupies residues 1 to 20; that stretch reads MPRTEMVRFVRLPVVLLAMA. Residues 21–125 constitute a propeptide, activation peptide; sequence ACLASVALGS…RKTVNVTTGR (105 aa). Asn120 carries an N-linked (GlcNAc...) asparagine glycan. Cysteines 147 and 188 form a disulfide. Active-site residues include Cys150, His287, and Asn307. The segment at 343–450 is 108-residue extension; the sequence is TPPPPPPPPP…TKAARLVPHQ (108 aa). The N-linked (GlcNAc...) asparagine glycan is linked to Asn397.

This sequence belongs to the peptidase C1 family.

It is found in the lysosome. In terms of biological role, the cysteine proteinases have a potential role in host-parasite interaction and virulence. This chain is Cysteine proteinase, found in Trypanosoma brucei brucei.